Consider the following 541-residue polypeptide: Cytochrome P450 67 (541 aa).

A heme-binding site is contributed by cysteine 479.

It belongs to the cytochrome P450 family. Requires heme as cofactor.

This Uromyces fabae (Rust fungus) protein is Cytochrome P450 67 (CYP67).